We begin with the raw amino-acid sequence, 238 residues long: ATP-dependent Clp protease proteolytic subunit 4 (238 aa).

Serine 113 functions as the Nucleophile in the catalytic mechanism. Histidine 138 is a catalytic residue.

The protein belongs to the peptidase S14 family. In terms of assembly, fourteen ClpP subunits assemble into 2 heptameric rings which stack back to back to give a disk-like structure with a central cavity, resembling the structure of eukaryotic proteasomes.

It is found in the cytoplasm. It carries out the reaction Hydrolysis of proteins to small peptides in the presence of ATP and magnesium. alpha-casein is the usual test substrate. In the absence of ATP, only oligopeptides shorter than five residues are hydrolyzed (such as succinyl-Leu-Tyr-|-NHMec, and Leu-Tyr-Leu-|-Tyr-Trp, in which cleavage of the -Tyr-|-Leu- and -Tyr-|-Trp bonds also occurs).. Functionally, cleaves peptides in various proteins in a process that requires ATP hydrolysis. Has a chymotrypsin-like activity. Plays a major role in the degradation of misfolded proteins. In Frankia casuarinae (strain DSM 45818 / CECT 9043 / HFP020203 / CcI3), this protein is ATP-dependent Clp protease proteolytic subunit 4.